Here is a 305-residue protein sequence, read N- to C-terminus: FMRFamide-related peptides type HF-4 (305 aa).

Positions M1 to S19 are cleaved as a signal peptide. F36, F47, and F66 each carry phenylalanine amide. I75 carries the isoleucine amide modification. Phenylalanine amide occurs at positions 84 and 93. An Isoleucine amide modification is found at I102. Residues F111, F120, F129, F138, F147, F156, and F165 each carry the phenylalanine amide modification. A propeptide spanning residues S168 to G305 is cleaved from the precursor.

Belongs to the FARP (FMRFamide related peptide) family. Central nervous system.

Its subcellular location is the secreted. Its function is as follows. Can function as both cardioregulatory hormones and transmitters and may regulate cardiovascular function. The protein is FMRFamide-related peptides type HF-4 of Cornu aspersum (Brown garden snail).